A 382-amino-acid polypeptide reads, in one-letter code: Threonine synthase (382 aa).

Lysine 93 is subject to N6-(pyridoxal phosphate)lysine. Residues asparagine 119, glycine 219–asparagine 223, and threonine 347 each bind pyridoxal 5'-phosphate.

Belongs to the threonine synthase family. It depends on pyridoxal 5'-phosphate as a cofactor.

It carries out the reaction O-phospho-L-homoserine + H2O = L-threonine + phosphate. Its pathway is amino-acid biosynthesis; L-threonine biosynthesis; L-threonine from L-aspartate: step 5/5. Functionally, catalyzes the gamma-elimination of phosphate from L-phosphohomoserine and the beta-addition of water to produce L-threonine. The protein is Threonine synthase (thrC) of Synechocystis sp. (strain ATCC 27184 / PCC 6803 / Kazusa).